Reading from the N-terminus, the 457-residue chain is Serine--tRNA ligase (457 aa).

Residue Thr252–Glu254 participates in L-serine binding. Residues Arg283–Glu285 and Val299 contribute to the ATP site. Glu306 is a binding site for L-serine. Glu370–Ser373 is an ATP binding site. An L-serine-binding site is contributed by Thr406.

The protein belongs to the class-II aminoacyl-tRNA synthetase family. Type-1 seryl-tRNA synthetase subfamily. Homodimer. The tRNA molecule binds across the dimer.

It localises to the cytoplasm. It carries out the reaction tRNA(Ser) + L-serine + ATP = L-seryl-tRNA(Ser) + AMP + diphosphate + H(+). The catalysed reaction is tRNA(Sec) + L-serine + ATP = L-seryl-tRNA(Sec) + AMP + diphosphate + H(+). The protein operates within aminoacyl-tRNA biosynthesis; selenocysteinyl-tRNA(Sec) biosynthesis; L-seryl-tRNA(Sec) from L-serine and tRNA(Sec): step 1/1. Its function is as follows. Catalyzes the attachment of serine to tRNA(Ser). Is also able to aminoacylate tRNA(Sec) with serine, to form the misacylated tRNA L-seryl-tRNA(Sec), which will be further converted into selenocysteinyl-tRNA(Sec). In Saccharolobus islandicus (strain Y.G.57.14 / Yellowstone #1) (Sulfolobus islandicus), this protein is Serine--tRNA ligase.